Reading from the N-terminus, the 792-residue chain is DNA ligase (792 aa).

Residues 42–46 (DAEYD), 91–92 (SL), and Glu-124 each bind NAD(+). Lys-126 functions as the N6-AMP-lysine intermediate in the catalytic mechanism. NAD(+)-binding residues include Arg-147, Glu-189, Lys-306, and Lys-330. 4 residues coordinate Zn(2+): Cys-424, Cys-426, Cys-448, and Cys-454. Residues 714–792 (KTDTAVAGKT…EDEWLAMVGG (79 aa)) form the BRCT domain.

The protein belongs to the NAD-dependent DNA ligase family. LigA subfamily. It depends on Mg(2+) as a cofactor. Requires Mn(2+) as cofactor.

It carries out the reaction NAD(+) + (deoxyribonucleotide)n-3'-hydroxyl + 5'-phospho-(deoxyribonucleotide)m = (deoxyribonucleotide)n+m + AMP + beta-nicotinamide D-nucleotide.. In terms of biological role, DNA ligase that catalyzes the formation of phosphodiester linkages between 5'-phosphoryl and 3'-hydroxyl groups in double-stranded DNA using NAD as a coenzyme and as the energy source for the reaction. It is essential for DNA replication and repair of damaged DNA. The protein is DNA ligase of Caulobacter sp. (strain K31).